The primary structure comprises 406 residues: Tyrosine--tRNA ligase (406 aa).

Tyr-35 lines the L-tyrosine pocket. The short motif at 40–49 is the 'HIGH' region element; it reads PTADSLHVGH. Residues Tyr-168 and Gln-172 each contribute to the L-tyrosine site. The short motif at 228–232 is the 'KMSKS' region element; the sequence is KMGKT. An ATP-binding site is contributed by Lys-231. The region spanning 340–404 is the S4 RNA-binding domain; it reads AELLDILVEA…RGKKNYNKIV (65 aa).

The protein belongs to the class-I aminoacyl-tRNA synthetase family. TyrS type 1 subfamily. Homodimer.

It localises to the cytoplasm. The enzyme catalyses tRNA(Tyr) + L-tyrosine + ATP = L-tyrosyl-tRNA(Tyr) + AMP + diphosphate + H(+). Functionally, catalyzes the attachment of tyrosine to tRNA(Tyr) in a two-step reaction: tyrosine is first activated by ATP to form Tyr-AMP and then transferred to the acceptor end of tRNA(Tyr). The sequence is that of Tyrosine--tRNA ligase from Clostridium perfringens (strain 13 / Type A).